We begin with the raw amino-acid sequence, 224 residues long: Lipoprotein-releasing system ATP-binding protein LolD (224 aa).

One can recognise an ABC transporter domain in the interval 4–224; the sequence is YTAKDISKNY…TLLDGSLQEE (221 aa). ATP is bound at residue 40–47; the sequence is GASGSGKT.

It belongs to the ABC transporter superfamily. Lipoprotein translocase (TC 3.A.1.125) family. The complex is composed of two ATP-binding proteins (LolD) and two transmembrane proteins (LolC and LolE).

The protein localises to the cell inner membrane. Part of the ABC transporter complex LolCDE involved in the translocation of mature outer membrane-directed lipoproteins, from the inner membrane to the periplasmic chaperone, LolA. Responsible for the formation of the LolA-lipoprotein complex in an ATP-dependent manner. In Desulfotalea psychrophila (strain LSv54 / DSM 12343), this protein is Lipoprotein-releasing system ATP-binding protein LolD.